The chain runs to 666 residues: Envelope glycoprotein (666 aa).

An N-terminal signal peptide occupies residues 1 to 33; the sequence is MDRPALPKSIKDKTNPWGPIILGILIMLGGALG. The tract at residues 31–264 is receptor-binding domain (RBD); it reads ALGKGSPHKV…KISDLGPRVP (234 aa). Over 34-607 the chain is Extracellular; sequence KGSPHKVFNL…FNRSPWLTTL (574 aa). Asn-42 is a glycosylation site (N-linked (GlcNAc...) asparagine; by host). 5 cysteine pairs are disulfide-bonded: Cys-76–Cys-127, Cys-102–Cys-116, Cys-103–Cys-112, Cys-150–Cys-170, and Cys-162–Cys-175. Residue Asp-115 coordinates Zn(2+). An N-linked (GlcNAc...) asparagine; by host glycan is attached at Asn-197. Cys-207 and Cys-213 are oxidised to a cystine. The disordered stretch occupies residues 265–310; it reads IGPNPVLSEQRPPSQPEPARLPPSSNLTQGGTPSAPTGPPQEGTGD. Residues 287–299 show a composition bias toward polar residues; it reads PSSNLTQGGTPSA. N-linked (GlcNAc...) asparagine; by host glycans are attached at residues Asn-290 and Asn-324. Intrachain disulfides connect Cys-334–Cys-337, Cys-334–Cys-560, Cys-364–Cys-417, Cys-424–Cys-437, and Cys-552–Cys-560. The CXXC motif lies at 334-337; that stretch reads CWLC. N-linked (GlcNAc...) asparagine; by host glycosylation is found at Asn-356 and Asn-363. Residues 378–399 form a disordered region; that stretch reads TGKPLPRKGSQDPPGPVQYHSG. N-linked (GlcNAc...) asparagine; by host glycosylation is present at Asn-431. The fusion peptide stretch occupies residues 469–489; that stretch reads VSLTLALLLGGLTMGGIAAGV. The stretch at 500–534 forms a coiled coil; sequence QQFEQLHAAIQADLKEVESSITNLEKSLTSLSEVV. An immunosuppression region spans residues 535–551; the sequence is LQNRRGLDLLFLEKGGL. The CX6CC motif lies at 552–560; the sequence is CAALKEECC. The helical transmembrane segment at 608–628 threads the bilayer; it reads ISTIMGPLIILLLILMFGPCI. The S-palmitoyl cysteine; by host moiety is linked to residue Cys-627. Topologically, residues 629-666 are cytoplasmic; that stretch reads LNRLVQFVKDRISVVQALVLTQQYHQLKPLEHGRAIVK. Residues 652-655 carry the YXXL motif; contains endocytosis signal motif; it reads YHQL.

As to quaternary structure, the mature envelope protein (Env) consists of a trimer of SU-TM heterodimers attached by a labile interchain disulfide bond. Post-translationally, specific enzymatic cleavages in vivo yield mature proteins. Envelope glycoproteins are synthesized as an inactive precursor that is N-glycosylated and processed likely by host cell furin or by a furin-like protease in the Golgi to yield the mature SU and TM proteins. The cleavage site between SU and TM requires the minimal sequence [KR]-X-[KR]-R. The R-peptide is released from the C-terminus of the cytoplasmic tail of the TM protein upon particle formation as a result of proteolytic cleavage by the viral protease. Cleavage of this peptide is required for TM to become fusogenic. In terms of processing, the CXXC motif is highly conserved across a broad range of retroviral envelope proteins. It is thought to participate in the formation of a labile disulfide bond possibly with the CX6CC motif present in the transmembrane protein. Isomerization of the intersubunit disulfide bond to an SU intrachain disulfide bond is thought to occur upon receptor recognition in order to allow membrane fusion. The transmembrane protein is palmitoylated. Post-translationally, the R-peptide is palmitoylated.

It is found in the virion membrane. The protein localises to the host cell membrane. Its function is as follows. The surface protein (SU) attaches the virus to the host cell by binding to its receptor. This interaction triggers the refolding of the transmembrane protein (TM) and is thought to activate its fusogenic potential by unmasking its fusion peptide. Fusion occurs at the host cell plasma membrane. In terms of biological role, the transmembrane protein (TM) acts as a class I viral fusion protein. Under the current model, the protein has at least 3 conformational states: pre-fusion native state, pre-hairpin intermediate state, and post-fusion hairpin state. During viral and target cell membrane fusion, the coiled coil regions (heptad repeats) assume a trimer-of-hairpins structure, positioning the fusion peptide in close proximity to the C-terminal region of the ectodomain. The formation of this structure appears to drive apposition and subsequent fusion of viral and target cell membranes. Membranes fusion leads to delivery of the nucleocapsid into the cytoplasm. The sequence is that of Envelope glycoprotein (env) from Hortulanus murine leukemia virus (HoMuLV).